We begin with the raw amino-acid sequence, 374 residues long: MRRVRTTRLFQVACAAIVALASSAMSAHATSRIKDLANIEGVRQNQLIGYGLVVGLNGTGDTLNNIPFTKQSLQAMLERMGVNIRGATIRTGNVAAVMVTGNLPPFATQGTRMDVTVSALGDAKNLQGGTLLVTPLLGADGNVYAVAQGSLAISGFQAEGEAAKIVRGVPTVGRIANGAIIEREIEFALNRLPNVRLALRNADFTTAKRIAAAINDFLGVKTAEPIDPSTVQLSIPPEFKGNVVAFLTEIEQLQVDPDLAAKIVIDERSGIIVMGRDVRVATVAVAQGNLTVTISESPQVSQPNPLSQGRTVVTPRTSVGVTEDGKKFAVVKDGVSLQQLVDGLNGLGIGPRDLISILQAIKAAGAIEADIEVM.

The N-terminal stretch at 1 to 29 is a signal peptide; that stretch reads MRRVRTTRLFQVACAAIVALASSAMSAHA.

The protein belongs to the FlgI family. As to quaternary structure, the basal body constitutes a major portion of the flagellar organelle and consists of four rings (L,P,S, and M) mounted on a central rod.

The protein resides in the periplasm. It is found in the bacterial flagellum basal body. In terms of biological role, assembles around the rod to form the L-ring and probably protects the motor/basal body from shearing forces during rotation. This is Flagellar P-ring protein from Bradyrhizobium sp. (strain BTAi1 / ATCC BAA-1182).